The sequence spans 149 residues: Histone H2A (149 aa).

A compositionally biased stretch (basic residues) spans 1–23 (METAGKAKKGFGGRKGGPRKKSV). Disordered regions lie at residues 1-25 (METAGKAKKGFGGRKGGPRKKSVTR) and 127-149 (KTAEKAAKEPKSPSKAGKSPKKA). Residues 127 to 138 (KTAEKAAKEPKS) show a composition bias toward basic and acidic residues. Short sequence motifs (SPKK motif) lie at residues 138–141 (SPSK) and 145–148 (SPKK).

The protein belongs to the histone H2A family. In terms of assembly, the nucleosome is a histone octamer containing two molecules each of H2A, H2B, H3 and H4 assembled in one H3-H4 heterotetramer and two H2A-H2B heterodimers. The octamer wraps approximately 147 bp of DNA.

The protein localises to the nucleus. It localises to the chromosome. Functionally, core component of nucleosome. Nucleosomes wrap and compact DNA into chromatin, limiting DNA accessibility to the cellular machineries which require DNA as a template. Histones thereby play a central role in transcription regulation, DNA repair, DNA replication and chromosomal stability. DNA accessibility is regulated via a complex set of post-translational modifications of histones, also called histone code, and nucleosome remodeling. This chain is Histone H2A, found in Petroselinum crispum (Parsley).